The sequence spans 623 residues: 1-deoxy-D-xylulose-5-phosphate synthase (623 aa).

Thiamine diphosphate-binding positions include His-80 and 121–123; that span reads GHS. Mg(2+) is bound at residue Asp-152. Thiamine diphosphate contacts are provided by residues 153–154, Asn-181, Tyr-289, and Glu-372; that span reads GA. Residue Asn-181 participates in Mg(2+) binding.

It belongs to the transketolase family. DXPS subfamily. Homodimer. Mg(2+) serves as cofactor. It depends on thiamine diphosphate as a cofactor.

The catalysed reaction is D-glyceraldehyde 3-phosphate + pyruvate + H(+) = 1-deoxy-D-xylulose 5-phosphate + CO2. It functions in the pathway metabolic intermediate biosynthesis; 1-deoxy-D-xylulose 5-phosphate biosynthesis; 1-deoxy-D-xylulose 5-phosphate from D-glyceraldehyde 3-phosphate and pyruvate: step 1/1. Catalyzes the acyloin condensation reaction between C atoms 2 and 3 of pyruvate and glyceraldehyde 3-phosphate to yield 1-deoxy-D-xylulose-5-phosphate (DXP). The protein is 1-deoxy-D-xylulose-5-phosphate synthase of Baumannia cicadellinicola subsp. Homalodisca coagulata.